The sequence spans 508 residues: 2,3-bisphosphoglycerate-independent phosphoglycerate mutase (508 aa).

Positions 9 and 59 each coordinate Mn(2+). Residue serine 59 is the Phosphoserine intermediate of the active site. Substrate is bound by residues histidine 120, 149-150 (RD), arginine 181, arginine 187, 254-257 (RADR), and lysine 331. Residues aspartate 398, histidine 402, aspartate 439, histidine 440, and histidine 456 each coordinate Mn(2+).

The protein belongs to the BPG-independent phosphoglycerate mutase family. Mn(2+) serves as cofactor.

It carries out the reaction (2R)-2-phosphoglycerate = (2R)-3-phosphoglycerate. The protein operates within carbohydrate degradation; glycolysis; pyruvate from D-glyceraldehyde 3-phosphate: step 3/5. Its function is as follows. Catalyzes the interconversion of 2-phosphoglycerate and 3-phosphoglycerate. The protein is 2,3-bisphosphoglycerate-independent phosphoglycerate mutase of Halobacterium salinarum (strain ATCC 700922 / JCM 11081 / NRC-1) (Halobacterium halobium).